Consider the following 373-residue polypeptide: MKYAAALTAIAALAARAAAVGVSGTPVGFASSATGGGDATPVYPTTTDELVSYLGDDEARVIVLSKTFDFTDTEGTTTTTGCAPWGTASGCQLAINKDDWCTNYEPDAPTTTVTYNTAGELGITVNSNKSLIGEGTSGVIKGRGLRMVSGVSNIIIQNIAVTDINPEYVWGGDAITLDEADLVWIDHVTTARIGRQHYVLGTDADSRVSITNNYINGESDYSATCDGHHYWNVYLDGSSDKVTFSGNYLYKTSGRAPKVQDNTYLHIYNNYWENNSGHAFEIGSGGYVLAEGNYFSNVDTVLETDTFEGALFSSDSASSTCESYIGRSCVANVNGGDLTGTSTTVLSNLSGDTLPSADAASTSPASNAGQGNL.

Residues 1–19 form the signal peptide; sequence MKYAAALTAIAALAARAAA. 2 disulfide bridges follow: cysteine 82/cysteine 101 and cysteine 91/cysteine 225. Residue asparagine 128 is glycosylated (N-linked (GlcNAc...) asparagine). The active site involves arginine 255. N-linked (GlcNAc...) asparagine glycosylation is present at asparagine 274. A disulfide bridge links cysteine 321 with cysteine 329. The N-linked (GlcNAc...) asparagine glycan is linked to asparagine 348. Positions 354–366 are enriched in low complexity; it reads LPSADAASTSPAS. Positions 354–373 are disordered; that stretch reads LPSADAASTSPASNAGQGNL.

It belongs to the polysaccharide lyase 1 family. Post-translationally, may be O-glycosylated; does not contain N-acetylglucosamine.

It is found in the secreted. It carries out the reaction Eliminative cleavage of (1-&gt;4)-alpha-D-galacturonan methyl ester to give oligosaccharides with 4-deoxy-6-O-methyl-alpha-D-galact-4-enuronosyl groups at their non-reducing ends.. In terms of biological role, pectinolytic enzymes consist of four classes of enzymes: pectin lyase, polygalacturonase, pectin methylesterase and rhamnogalacturonase. Among pectinolytic enzymes, pectin lyase is the most important in depolymerization of pectin, since it cleaves internal glycosidic bonds of highly methylated pectins. This chain is Pectin lyase D (pelD), found in Aspergillus niger.